Consider the following 222-residue polypeptide: Eukaryotic translation initiation factor 3 subunit K (222 aa).

The PCI domain maps to 46–208 (YDLEANLAVL…KIKTKNITEK (163 aa)).

The protein belongs to the eIF-3 subunit K family. As to quaternary structure, component of the eukaryotic translation initiation factor 3 (eIF-3) complex. The eIF-3 complex interacts with pix.

It localises to the cytoplasm. Component of the eukaryotic translation initiation factor 3 (eIF-3) complex, which is involved in protein synthesis of a specialized repertoire of mRNAs and, together with other initiation factors, stimulates binding of mRNA and methionyl-tRNAi to the 40S ribosome. The eIF-3 complex specifically targets and initiates translation of a subset of mRNAs involved in cell proliferation. The sequence is that of Eukaryotic translation initiation factor 3 subunit K from Drosophila willistoni (Fruit fly).